Reading from the N-terminus, the 387-residue chain is 3-ketoacyl-CoA thiolase (387 aa).

The active-site Acyl-thioester intermediate is the Cys-91. Catalysis depends on proton acceptor residues His-343 and Cys-373.

The protein belongs to the thiolase-like superfamily. Thiolase family. In terms of assembly, heterotetramer of two alpha chains (FadB) and two beta chains (FadA).

The protein resides in the cytoplasm. It carries out the reaction an acyl-CoA + acetyl-CoA = a 3-oxoacyl-CoA + CoA. It participates in lipid metabolism; fatty acid beta-oxidation. In terms of biological role, catalyzes the final step of fatty acid oxidation in which acetyl-CoA is released and the CoA ester of a fatty acid two carbons shorter is formed. This is 3-ketoacyl-CoA thiolase from Shewanella sp. (strain W3-18-1).